Here is a 103-residue protein sequence, read N- to C-terminus: Histone H4.1 (103 aa).

Residues 1–14 are compositionally biased toward gly residues; that stretch reads MSGRGKGGKGLGKG. Residues 1-20 form a disordered region; it reads MSGRGKGGKGLGKGGAKRHR. Lys6 carries the post-translational modification N6-acetyl-N6-methyllysine; alternate. 3 positions are modified to N6-methyllysine; alternate: Lys6, Lys9, and Lys13. Residue Lys13 is modified to N6-acetyl-N6-methyllysine; alternate. Residues 17–21 mediate DNA binding; the sequence is KRHRK. Lys92 is modified (N6-glutaryllysine).

This sequence belongs to the histone H4 family. The nucleosome is a histone octamer containing two molecules each of H2A, H2B, H3 and H4 assembled in one H3-H4 heterotetramer and two H2A-H2B heterodimers. The octamer wraps approximately 147 bp of DNA. Post-translationally, glutarylation at Lys-92 (H4K91glu) destabilizes nucleosomes by promoting dissociation of the H2A-H2B dimers from nucleosomes.

The protein resides in the nucleus. It localises to the chromosome. Functionally, core component of nucleosome. Nucleosomes wrap and compact DNA into chromatin, limiting DNA accessibility to the cellular machineries which require DNA as a template. Histones thereby play a central role in transcription regulation, DNA repair, DNA replication and chromosomal stability. DNA accessibility is regulated via a complex set of post-translational modifications of histones, also called histone code, and nucleosome remodeling. The chain is Histone H4.1 (hhfA) from Emericella nidulans (strain FGSC A4 / ATCC 38163 / CBS 112.46 / NRRL 194 / M139) (Aspergillus nidulans).